The primary structure comprises 50 residues: Sperm protamine P1 (50 aa).

The protein belongs to the protamine P1 family. As to expression, testis.

It is found in the nucleus. Its subcellular location is the chromosome. Functionally, protamines substitute for histones in the chromatin of sperm during the haploid phase of spermatogenesis. They compact sperm DNA into a highly condensed, stable and inactive complex. In Trachypithecus vetulus (Purple-faced langur), this protein is Sperm protamine P1 (PRM1).